The following is an 865-amino-acid chain: MAELSTRYNPAEIETKWYRYWEEKGYFTPKGVGEKFSIVIPPPNITGRIHMGHALNITLQDIVVRYKRMKGYDVLWVPGEDHAGIATQNAVEKFLLQTQGKTREEIGREKFLEITWEWANKYRREIREQIKALGASVDWTRERFTLDEGLSRAVRKVFVELYRKGLIYRGKYIVNWCPRCKTVLSDEEVEHKEHKSKLYYVKYPVKDSDEYIVVATTRPETMLGDTAVAVHPEDERYKNFVGKTLILPLVGREIPVVADKYVDPKFGTGAVKVTPAHDPNDYLIAQRHNLPMIEIFDDNARINENGGKYKGLDRYEAREKIVKDLEEQGFLVKIEDYTHSVGHCYRCDTVIEPKLSDQWFVSTKPLAKRAIEAVENGEIRFFPERWTKVYLNWMYEIRDWCISRQLWWGHRIPVWYCQDCGHLNVSEEDVEKCEKCGSTNLKQDEDVLDTWFSSALWPFSTLGWPEETEDLKRYYPTDLLVTGFDIIFFWVARMIMMGYEFMNDKPFSHVYIHQLVRDKYGRKMSKSLGNGIDPLEVIDEYGADPMRFTLAILAAQGRDIKLDPRYFDAYKKFANKIWNATRFVLMNLEDYKEVPLENLKTVDKWILTRLNKTVEEVTNALENYDFNIAARTIYNFFWDDFCDWYIEASKPRLKTEERNLVQTVLVKVLDASLRLLHPFMPFLTEELWQKLPVAGESITIAKWPEIERELIDETAEKEFTRLMNMVRGVRNVRAEMNLPQSQRVKVYIKGYEVTEEEELLLKTLGNIEEVSFVNEKPPKTATAYVEEEIEAYVDLGGLIDFEKEKERLKQIMEKIQKEIDRLEKKLANKDFVEKAPEEVVEETKEKLNTNRERLARLESILRDLE.

The 'HIGH' region motif lies at 43–53; sequence PNITGRIHMGH. The short motif at 523-527 is the 'KMSKS' region element; that stretch reads KMSKS. Lys-526 serves as a coordination point for ATP. Residues 797–865 adopt a coiled-coil conformation; sequence GLIDFEKEKE…RLESILRDLE (69 aa).

It belongs to the class-I aminoacyl-tRNA synthetase family. ValS type 1 subfamily. Monomer.

The protein resides in the cytoplasm. It catalyses the reaction tRNA(Val) + L-valine + ATP = L-valyl-tRNA(Val) + AMP + diphosphate. Its function is as follows. Catalyzes the attachment of valine to tRNA(Val). As ValRS can inadvertently accommodate and process structurally similar amino acids such as threonine, to avoid such errors, it has a 'posttransfer' editing activity that hydrolyzes mischarged Thr-tRNA(Val) in a tRNA-dependent manner. The protein is Valine--tRNA ligase of Thermotoga maritima (strain ATCC 43589 / DSM 3109 / JCM 10099 / NBRC 100826 / MSB8).